Here is a 282-residue protein sequence, read N- to C-terminus: Caspase-3 (282 aa).

Residues His131 and Cys174 contribute to the active site.

Belongs to the peptidase C14A family. As to quaternary structure, heterotetramer that consists of two anti-parallel arranged heterodimers, each one formed by a 17 kDa (p17) and a 12 kDa (p12) subunit.

The protein localises to the cytoplasm. It catalyses the reaction Strict requirement for an Asp residue at positions P1 and P4. It has a preferred cleavage sequence of Asp-Xaa-Xaa-Asp-|- with a hydrophobic amino-acid residue at P2 and a hydrophilic amino-acid residue at P3, although Val or Ala are also accepted at this position.. Functionally, important mediator of apoptosis. At the onset of apoptosis, it proteolytically cleaves poly(ADP-ribose) polymerase PARP1 at a '216-Asp-|-Gly-217' bond. This is Caspase-3 (casp3) from Xenopus laevis (African clawed frog).